Here is a 675-residue protein sequence, read N- to C-terminus: MRVLGGRTGTLLACLALVLPVLEANFLSRQHASQVLIRRRRANTLLEETKKGNLERECIEELCNKEEAREIFENNPETEYFYPKYLGCLGSFRAGLFTAARLSTNAYPDLRSCVNAISDQCNPLPCNEDGFMTCKDGQATFTCICKSGWQGEKCESDINECKDPVNINGGCSQICENTPGSYHCSCKNGFVMLSNKKDCKDVDECVLKPSICGTAVCKNIPGDFECECAEGYKYNPVSKSCDDVDECAENLCAQLCVNYPGGYSCYCDGKKGFKLAQDQKSCEAVPVCLPLDLDKNYELLYLAEQFVGVVLYLKFRLPETTRFSAEFDFRTYDSEGVILYAESSDHSAWFLIALREGKIEIQFKNEKTTKMTTGGKVINDGLWHMVSVEELEQSISVKIAKEAVMNINKPGSLFKPTNGFLETKVYFAGVPRKMENALIRPINPRLDGCIRGWNLMNQGTSGVKEIIQEKQNKHCLVNVEKGSYYPGTGVAQFSINYKNESNPEAWQINVSLNIRPSAGTGVMLALVSDNTVPFALSLVDSATEKLQDILVSVESMVIGRIEAISLCSDQQTFLEIRVNRNNLELSTQLRKDSFHSEDFQRQFAILDEAMKGTVVTYLGGLPDVPFSATPVNAFYQGCMEVNINGVQVDLDEAISKHNDIRAHSCPSVWQKTKHT.

A signal peptide spans M1–A24. A propeptide spanning residues N25–R41 is cleaved from the precursor. In terms of domain architecture, Gla spans A42 to G87. E47, E48, E55, E57, E60, E61, E66, E67, E70, E73, and E77 each carry 4-carboxyglutamate. C58 and C63 are joined by a disulfide. 16 disulfide bridges follow: C88–C113, C121–C134, C126–C143, C145–C154, C161–C175, C171–C184, C186–C199, C205–C217, C212–C226, C228–C241, C247–C256, C252–C265, C267–C282, C288–C567, C449–C475, and C638–C665. The thrombin-sensitive stretch occupies residues C88–A116. Positions I117–E155 constitute an EGF-like 1 domain. At D136 the chain carries (3R)-3-hydroxyaspartate. Residues D157–K200 form the EGF-like 2; calcium-binding domain. N177 carries the post-translational modification (3R)-3-hydroxyasparagine. The EGF-like 3; calcium-binding domain maps to D201–D242. The residue at position 219 (N219) is a (3R)-3-hydroxyasparagine. In terms of domain architecture, EGF-like 4; calcium-binding spans D243–E283. N258 is modified ((3R)-3-hydroxyasparagine). 2 Laminin G-like domains span residues L299 to C475 and Y484 to C665. N-linked (GlcNAc...) asparagine glycosylation is found at N499 and N509.

Post-translationally, the iron and 2-oxoglutarate dependent 3-hydroxylation of aspartate and asparagine is (R) stereospecific within EGF domains. Plasma.

The protein resides in the secreted. Anticoagulant plasma protein; it is a cofactor to activated protein C in the degradation of coagulation factors Va and VIIIa. It helps to prevent coagulation and stimulating fibrinolysis. This is Vitamin K-dependent protein S (PROS1) from Bos taurus (Bovine).